Consider the following 560-residue polypeptide: Formate--tetrahydrofolate ligase (560 aa).

69–76 (TPAGEGKS) contributes to the ATP binding site.

This sequence belongs to the formate--tetrahydrofolate ligase family.

The enzyme catalyses (6S)-5,6,7,8-tetrahydrofolate + formate + ATP = (6R)-10-formyltetrahydrofolate + ADP + phosphate. Its pathway is one-carbon metabolism; tetrahydrofolate interconversion. The polypeptide is Formate--tetrahydrofolate ligase (Bacillus pumilus (strain SAFR-032)).